The sequence spans 144 residues: Large ribosomal subunit protein uL15 (144 aa).

A disordered region spans residues 1 to 57; it reads MKLNDLSPAPGSRREKHRPGRGIGSGLGKTGGRGHKGQTSRSGGSIAPGFEGGQQPL. The segment covering 21 to 31 has biased composition (gly residues); sequence RGIGSGLGKTG.

Belongs to the universal ribosomal protein uL15 family. Part of the 50S ribosomal subunit.

Functionally, binds to the 23S rRNA. In Pseudomonas entomophila (strain L48), this protein is Large ribosomal subunit protein uL15.